We begin with the raw amino-acid sequence, 327 residues long: Probable cell division protein WhiA (327 aa).

A DNA-binding region (H-T-H motif) is located at residues 277–310 (EELGRLADPPMTKDAVAGRIRRLLSMADRKAKQD). The segment at 304-327 (DRKAKQDGIPDTESAVTPDLLEDA) is disordered.

It belongs to the WhiA family.

Its function is as follows. Involved in cell division and chromosome segregation. This Mycolicibacterium vanbaalenii (strain DSM 7251 / JCM 13017 / BCRC 16820 / KCTC 9966 / NRRL B-24157 / PYR-1) (Mycobacterium vanbaalenii) protein is Probable cell division protein WhiA.